A 238-amino-acid polypeptide reads, in one-letter code: Probable transcriptional regulatory protein YeeN (238 aa).

This sequence belongs to the TACO1 family. YeeN subfamily.

The protein resides in the cytoplasm. The chain is Probable transcriptional regulatory protein YeeN from Shigella flexneri.